The following is a 279-amino-acid chain: Methyltransferase prhM (279 aa).

Residues 124-125 (DI) and 152-153 (DV) each bind S-adenosyl-L-methionine.

The protein belongs to the class I-like SAM-binding methyltransferase superfamily.

It functions in the pathway secondary metabolite biosynthesis; terpenoid biosynthesis. Its function is as follows. Methyltransferase; part of the gene cluster that mediates the biosynthesis of paraherquonin, a meroterpenoid with a unique, highly congested hexacyclic molecular architecture. The first step of the pathway is the synthesis of 3,5-dimethylorsellinic acid (DMOA) by the polyketide synthase prhL. Synthesis of DMOA is followed by farnesylation by the prenyltransferase prhE, methylesterification by the methyl-transferase prhM, epoxidation of the prenyl chain by the flavin-dependent monooxygenase prhF, and cyclization of the farnesyl moiety by the terpene cyclase prhH, to yield the tetracyclic intermediate, protoaustinoid A. The short chain dehydrogenase prhI then oxidizes the C-3 alcohol group of the terpene cyclase product to transform protoaustinoid A into protoaustinoid B. The FAD-binding monooxygenase prhJ catalyzes the oxidation of protoaustinoid B into preaustinoid A which is further oxidized into preaustinoid A1 by FAD-binding monooxygenase phrK. Finally, prhA leads to berkeleydione via the berkeleyone B intermediate. PrhA is a multifunctional dioxygenase that first desaturates at C5-C6 to form berkeleyone B, followed by rearrangement of the A/B-ring to form the cycloheptadiene moiety in berkeleydione. Berkeleydione serves as the key intermediate for the biosynthesis of paraherquonin as well as many other meroterpenoids. The cytochrome P450 monooxygenases prhB, prhD, and prhN, as well as the isomerase prhC, are probably involved in the late stage of paraherquonin biosynthesis, after the production of berkeleydione. Especially prhC might be a multifunctional enzyme that catalyzes the D-ring expansion via intramolecular methoxy rearrangement, as well as the hydrolysis of the expanded D-ring. The polypeptide is Methyltransferase prhM (Penicillium brasilianum).